The sequence spans 201 residues: Ras-related protein Rab-1B (201 aa).

Residue Met1 is modified to N-acetylmethionine. 13 residues coordinate GTP: Ser17, Gly18, Val19, Gly20, Lys21, Ser22, Cys23, Tyr33, Thr34, Glu35, Ser36, Ser39, and Thr40. Ser22 lines the Mg(2+) pocket. Residues 30–45 (DDTYTESYISTIGVDF) carry the Switch 1 motif. The Mg(2+) site is built by Thr40 and Asp63. Positions 64–83 (TAGQERFRTITSSYYRGAHG) are switch 2 region; Required for interaction with REP1/CHM. Residues 65-80 (AGQERFRTITSSYYRG) carry the Switch 2 motif. GTP is bound by residues Gly66, Asn121, Lys122, Asp124, Ser151, Ala152, and Lys153. Residues 173–201 (MGPGAASGGERPNLKIDSTPVKQAGGGCC) are disordered. Residues Cys200 and Cys201 are each lipidated (S-geranylgeranyl cysteine). Cysteine methyl ester is present on Cys201.

This sequence belongs to the small GTPase superfamily. Rab family. As to quaternary structure, interacts with MICAL1 and MICAL2. Interacts (in GTP-bound form) with MICALCL, MICAL1 and MILCAL3. Interacts with GDI1; the interaction requires the GDP-bound state. Interacts with CHM/REP1; the interaction requires the GDP-bound form and is necessary for prenylation by GGTase II. Interacts with RabGAP TBC1D20. Interacts (in GDP-bound form) with lipid phosphatase MTMR6 (via GRAM domain); the interaction regulates MTMR6 recruitment to the endoplasmic reticulum-Golgi intermediate compartment. Interacts (in GDP-bound form) with lipid phosphatase MTMR7. It depends on Mg(2+) as a cofactor. Prenylated; by GGTase II, only after interaction of the substrate with Rab escort protein 1 (REP1).

It localises to the cytoplasm. It is found in the membrane. The protein resides in the preautophagosomal structure membrane. The protein localises to the perinuclear region. The catalysed reaction is GTP + H2O = GDP + phosphate + H(+). Regulated by guanine nucleotide exchange factors (GEFs) which promote the exchange of bound GDP for free GTP. Regulated by GTPase activating proteins (GAPs) including TBC1D20 which increases the GTP hydrolysis activity. Inhibited by GDP dissociation inhibitors (GDIs). In terms of biological role, the small GTPases Rab are key regulators of intracellular membrane trafficking, from the formation of transport vesicles to their fusion with membranes. Rabs cycle between an inactive GDP-bound form and an active GTP-bound form that is able to recruit to membranes different set of downstream effectors directly responsible for vesicle formation, movement, tethering and fusion. Plays a role in the initial events of the autophagic vacuole development which take place at specialized regions of the endoplasmic reticulum. Regulates vesicular transport between the endoplasmic reticulum and successive Golgi compartments. Required to modulate the compacted morphology of the Golgi. Promotes the recruitment of lipid phosphatase MTMR6 to the endoplasmic reticulum-Golgi intermediate compartment. The chain is Ras-related protein Rab-1B (RAB1B) from Bos taurus (Bovine).